The primary structure comprises 39 residues: Photosystem II reaction center protein I (39 aa).

A helical membrane pass occupies residues Ile6–Ser26.

It belongs to the PsbI family. As to quaternary structure, PSII is composed of 1 copy each of membrane proteins PsbA, PsbB, PsbC, PsbD, PsbE, PsbF, PsbH, PsbI, PsbJ, PsbK, PsbL, PsbM, PsbT, PsbX, PsbY, PsbZ, Psb30/Ycf12, peripheral proteins PsbO, CyanoQ (PsbQ), PsbU, PsbV and a large number of cofactors. It forms dimeric complexes.

The protein localises to the cellular thylakoid membrane. In terms of biological role, one of the components of the core complex of photosystem II (PSII), required for its stability and/or assembly. PSII is a light-driven water:plastoquinone oxidoreductase that uses light energy to abstract electrons from H(2)O, generating O(2) and a proton gradient subsequently used for ATP formation. It consists of a core antenna complex that captures photons, and an electron transfer chain that converts photonic excitation into a charge separation. The chain is Photosystem II reaction center protein I from Synechococcus sp. (strain RCC307).